A 369-amino-acid polypeptide reads, in one-letter code: Cyclic AMP receptor-like protein A (369 aa).

At 1 to 4 the chain is on the extracellular side; it reads MIQI. Residues 5 to 22 form a helical membrane-spanning segment; it reads LLSTFISFIIIIVSSNDI. Residues 23–72 are Cytoplasmic-facing; that stretch reads RSGENDNFNNNKMINNFLTTITTNDTIIIKETESPNDYDFSKEQIESLDK. A helical transmembrane segment spans residues 73 to 93; sequence IVYFSSTMGIVGALFIIVSFF. Residues 94–100 are Extracellular-facing; the sequence is LFKAART. A helical membrane pass occupies residues 101 to 121; it reads FATKMIFFLSLSDLFAAIFYL. Over 122–146 the chain is Cytoplasmic; sequence PYYRDSDIMCNLQGMGLVFFLSSSY. A helical membrane pass occupies residues 147 to 167; sequence LWTMCISISLFMVFFTTIFEL. Residues 168–173 lie on the Extracellular side of the membrane; sequence NHWFKY. A helical transmembrane segment spans residues 174–194; it reads FHFICWGIPLFTAIISLIFHA. At 195-212 the chain is on the cytoplasmic side; that stretch reads YGKTGSWCFISDPTSIFR. A helical membrane pass occupies residues 213–233; that stretch reads LLYYLPLIVVFFINLVVFIAI. Residues 234–247 are Extracellular-facing; the sequence is RWKISQHSNSLVSR. The chain crosses the membrane as a helical span at residues 248–268; it reads VNIIVSFYLIAFSLSQLPTII. Residues 269–369 lie on the Cytoplasmic side of the membrane; sequence NSIQNFSDPD…KLIIDDYNRV (101 aa).

Belongs to the G-protein coupled receptor 5 family.

It localises to the membrane. Functionally, receptor for cAMP which may play a role in prestalk cell differentiation. May act as a negative regulator of cell growth. This chain is Cyclic AMP receptor-like protein A (crlA), found in Dictyostelium discoideum (Social amoeba).